Here is a 340-residue protein sequence, read N- to C-terminus: MKESINILAIESSCDETSAAVVVNGREVLSNIIASQISTHEKFGGVVPEVASRKHIEVISAVVQEALDEANFTLDDIDAIGVTYGPGLVGALLVGLQYAKGLAFATGKPLIGVNHIEGHISANFIEYKDLKPPFMCLVVSGGHTFIVYMKDYGEFEVLGETRDDAAGEAFDKVARAIGLGYPGGPKIDKISKEGNEEAIKFPRANFHNDTLDFSFSGIKSAVLNYLNKKEMKGEEINKADVAASFQKSVVDVLVDNTIKACMSKKVDKIAVAGGVASNSCLRETLVRECKKKGIEVLIPPFILCTDNAAMIGSAAYFEYIKGRSTSLDINAVPNLKLGER.

The Fe cation site is built by His-115 and His-119. Residues 138 to 142 (VVSGG), Asp-171, Gly-184, Asp-188, and Asn-278 contribute to the substrate site. Asp-306 serves as a coordination point for Fe cation.

Belongs to the KAE1 / TsaD family. The cofactor is Fe(2+).

Its subcellular location is the cytoplasm. It catalyses the reaction L-threonylcarbamoyladenylate + adenosine(37) in tRNA = N(6)-L-threonylcarbamoyladenosine(37) in tRNA + AMP + H(+). Required for the formation of a threonylcarbamoyl group on adenosine at position 37 (t(6)A37) in tRNAs that read codons beginning with adenine. Is involved in the transfer of the threonylcarbamoyl moiety of threonylcarbamoyl-AMP (TC-AMP) to the N6 group of A37, together with TsaE and TsaB. TsaD likely plays a direct catalytic role in this reaction. The protein is tRNA N6-adenosine threonylcarbamoyltransferase of Clostridium botulinum (strain Kyoto / Type A2).